We begin with the raw amino-acid sequence, 495 residues long: MSNNKKLTSLFGAPVSDRENSMTAGPRGPLLMQDWYFLEQMAHFDREVIPERRMHAKGSGAFGTFTVTNDITQYTSASIFSEVGKQTEMFARFSTVAGERGAADAERDIRGFALKFYTDEGNWDLVGNNTPVFFFRDPKLFASLNHAIKRDPRTNMRSAQNNWDFWTSLPEALHQVTILMTDRGIPKGFRNMHGFGSHTYSMYNDKGERVWVKFHHRTQQGIENLQPDEAARTIAEDRESSQRDLFEAIENKDYPKWKTYIQVMTEEQARNHKDNPFDLTKVWYKGDYPLIEVGEWELNRNPDNYFQDVEQAAFAPTNIVPGIDFSPDRMLQGRLFSYGDAQRYRLGVNHWQIPVNQPKGVGIENICPFSRDGQMRILDNNQGGSTHYYPNSEGAFEDQPEFKKPGLKVEGEAYEYDFREDDDNYFEQPGRLFRLQSKEQQERIFENTANEMQGTTLEVQHRHIRHCYKADSEYGKGVAKALGIDINDVDLEVKD.

The segment at 1–25 (MSNNKKLTSLFGAPVSDRENSMTAG) is disordered. Catalysis depends on residues His55 and Asn128. A heme-binding site is contributed by Tyr338.

Belongs to the catalase family. Homodimer. Heme serves as cofactor.

The enzyme catalyses 2 H2O2 = O2 + 2 H2O. Decomposes hydrogen peroxide into water and oxygen; serves to protect cells from the toxic effects of hydrogen peroxide. This is Catalase (katA) from Staphylococcus saprophyticus subsp. saprophyticus (strain ATCC 15305 / DSM 20229 / NCIMB 8711 / NCTC 7292 / S-41).